The chain runs to 256 residues: DNA repair protein RecO (256 aa).

Belongs to the RecO family.

Functionally, involved in DNA repair and RecF pathway recombination. The sequence is that of DNA repair protein RecO from Rhizobium etli (strain CIAT 652).